The following is a 332-amino-acid chain: Tryptophan--tRNA ligase (332 aa).

Residues 11–13 and 19–20 each bind ATP; these read QPS and GN. The 'HIGH' region signature appears at 12–20; that stretch reads PSGELTIGN. Asp-135 lines the L-tryptophan pocket. ATP is bound by residues 147-149, Val-186, and 195-199; these read GQD and KMSKS. The 'KMSKS' region motif lies at 195-199; it reads KMSKS.

The protein belongs to the class-I aminoacyl-tRNA synthetase family. As to quaternary structure, homodimer.

The protein localises to the cytoplasm. It catalyses the reaction tRNA(Trp) + L-tryptophan + ATP = L-tryptophyl-tRNA(Trp) + AMP + diphosphate + H(+). Its function is as follows. Catalyzes the attachment of tryptophan to tRNA(Trp). The sequence is that of Tryptophan--tRNA ligase from Shewanella oneidensis (strain ATCC 700550 / JCM 31522 / CIP 106686 / LMG 19005 / NCIMB 14063 / MR-1).